The chain runs to 615 residues: Crinkler effector protein 15 (615 aa).

The N-terminal stretch at 1-17 (MVKLVCAIVGVAGSAFP) is a signal peptide. The tract at residues 18-54 (VDIDASQLVGDLKKAIKAENAMTFTGDAKDLQLFLAK) is LQLFLAK domain. Positions 55-136 (QPVDDESGKE…NMELPSSEQI (82 aa)) are DWL domain. Residues 137-143 (HVLVVVP) carry the HVLVXXP motif motif. Residue Asn531 is glycosylated (N-linked (GlcNAc...) asparagine).

This sequence belongs to the Crinkler effector family.

It localises to the secreted. The protein localises to the host nucleus. In terms of biological role, secreted effector that elicits necrosis in host plants, a characteristic of plant innate immunity. The protein is Crinkler effector protein 15 of Phytophthora infestans (Potato late blight agent).